The primary structure comprises 547 residues: uncharacterized protein (547 aa).

The Extracellular portion of the chain corresponds to 1–21 (MVKKHQNSKMGNTNHFGHLKS). Residues 22–42 (FVGGNVVALGAGTPYLFSFYA) traverse the membrane as a helical segment. Residues 43 to 58 (PQLLSKCHIPVSASSK) are Cytoplasmic-facing. Residues 59–79 (LSFSLTIGSSLMGILAGIVVD) traverse the membrane as a helical segment. Topologically, residues 80–83 (RSPK) are extracellular. The chain crosses the membrane as a helical span at residues 84–104 (LSCLIGSMCVFIAYLILNLCY). Residues 105 to 110 (KHEWSS) are Cytoplasmic-facing. Residues 111–131 (TFLISLSLVLIGYGSVSGFYA) traverse the membrane as a helical segment. At 132 to 144 (SVKCANTNFPQHR) the chain is on the extracellular side. The chain crosses the membrane as a helical span at residues 145-165 (GTAGAFPVSLYGLSGMVFSYL). At 166 to 175 (CSKLFGENIE) the chain is on the cytoplasmic side. The helical transmembrane segment at 176–196 (HVFIFLMVACGCMILVGYFSL) threads the bilayer. Residues 197–323 (DIFSNAEGDD…LKSSTFIGYY (127 aa)) are Extracellular-facing. The residue at position 237 (S237) is a Phosphoserine. The segment at 275-300 (LLSPSSPHTKYDFEDENTSKNTVGEN) is disordered. The chain crosses the membrane as a helical span at residues 324 to 344 (IVLGILQGVGLMYIYSVGFMV). Residues 345 to 398 (QAQVSTPPLNQLPINAEKIQSLQVTLLSLLSFCGRLSSGPISDFLVKKFKAQRL) lie on the Cytoplasmic side of the membrane. A helical membrane pass occupies residues 399 to 419 (WNIVIASLLVFLASNKISHDF). At 420 to 437 (SSIEDPSLRASKSFKNIS) the chain is on the extracellular side. The helical transmembrane segment at 438–458 (VCSAIFGYSFGVLFGTFPSIV) threads the bilayer. Residues 459 to 469 (ADRFGTNGYST) lie on the Cytoplasmic side of the membrane. A helical membrane pass occupies residues 470-490 (LWGVLTTGGVFSVSVFTDILG). The Extracellular segment spans residues 491 to 514 (RDFKANTGDDDGNCKKGVLCYSYT). A helical transmembrane segment spans residues 515–535 (FMVTKYCAAFNLLFVLGIIGY). The Cytoplasmic portion of the chain corresponds to 536-547 (TYYRRRATANSL).

The protein localises to the membrane. This is an uncharacterized protein from Saccharomyces cerevisiae (strain ATCC 204508 / S288c) (Baker's yeast).